We begin with the raw amino-acid sequence, 246 residues long: Small ribosomal subunit protein uS2 (246 aa).

The interval 224 to 246 (AKQGEESAETEAKEAETTETTTA) is disordered. Residues 225 to 239 (KQGEESAETEAKEAE) are compositionally biased toward basic and acidic residues.

The protein belongs to the universal ribosomal protein uS2 family.

The chain is Small ribosomal subunit protein uS2 from Bacillus licheniformis (strain ATCC 14580 / DSM 13 / JCM 2505 / CCUG 7422 / NBRC 12200 / NCIMB 9375 / NCTC 10341 / NRRL NRS-1264 / Gibson 46).